Here is a 393-residue protein sequence, read N- to C-terminus: MLRYLTAGESHGPQLTAIIEGLPAGLKISDESINCDLARRQCGYGRGGRMKIERDEAQILSGVRWGETIGSPVTLCIVNRDWINWQEKMSPNARHRDEKIRVTRSRPGHADLPGAMKYDHRDVRNILERSSARETAVRVAVGAVAKAFLASFGIEVNGFVSEVGGIRAERRSLQLERMKELSAASELFTYDAEAEERMKAFIDGAREAGDTVGGVVEIIASGLPVGLGSHVQWDRKLDARLAMAVMSIQAIKGVEIGLGFDAARRPGSQVHDEIYYDSTRISRGELSGFYRKSNNAGGIEGGITNGEDIVIRAAMKPIPTLYRPLRSVDMQTKEPFEATVERSDVCAVPAAAVVAEAVVALELANAMLEKFGGDSLGEVRRNYEGYLEYVRAF.

Residues R40 and R46 each coordinate NADP(+). FMN is bound by residues 129–131 (RSS), 249–250 (QA), G301, 316–320 (KPIPT), and R342.

Belongs to the chorismate synthase family. Homotetramer. FMNH2 serves as cofactor.

It catalyses the reaction 5-O-(1-carboxyvinyl)-3-phosphoshikimate = chorismate + phosphate. It participates in metabolic intermediate biosynthesis; chorismate biosynthesis; chorismate from D-erythrose 4-phosphate and phosphoenolpyruvate: step 7/7. In terms of biological role, catalyzes the anti-1,4-elimination of the C-3 phosphate and the C-6 proR hydrogen from 5-enolpyruvylshikimate-3-phosphate (EPSP) to yield chorismate, which is the branch point compound that serves as the starting substrate for the three terminal pathways of aromatic amino acid biosynthesis. This reaction introduces a second double bond into the aromatic ring system. This Geobacter sulfurreducens (strain ATCC 51573 / DSM 12127 / PCA) protein is Chorismate synthase.